The sequence spans 668 residues: Bestrophin-3 (668 aa).

At 1 to 31 the chain is on the cytoplasmic side; that stretch reads MTVTYSSKVANATFFGFHRLLLKWRGSIYKL. A10 provides a ligand contact to Ca(2+). The helical transmembrane segment at 32 to 51 threads the bilayer; sequence LYREFIVFAVLYTAISLVYR. Residues 52–60 lie on the Extracellular side of the membrane; the sequence is LLLTGVQKR. The helical transmembrane segment at 61 to 82 threads the bilayer; the sequence is YFEKLSIYCDRYAEQIPVTFVL. The Cytoplasmic portion of the chain corresponds to 83 to 237; that stretch reads GFYVTLVVNR…DWVGIPLVYT (155 aa). A helical membrane pass occupies residues 238 to 255; it reads QVVTLAVYTFFFACLIGR. Residues 256-274 lie on the Extracellular side of the membrane; the sequence is QFLDPTKGYAGHDLDLYIP. Residues 275–288 form a helical membrane-spanning segment; the sequence is IFTLLQFFFYAGWL. Over 289–668 the chain is Cytoplasmic; sequence KVAEQLINPF…LNKETEESPK (380 aa). Residues Q293, N296, D301, and D304 each coordinate Ca(2+). Disordered stretches follow at residues 400-454, 473-493, and 532-570; these read SAHE…KKSC, RETSQTSTLQSLTPQSSVRTS, and TGVQPSKTEQQQGPMGSILSPSEKETPPGGPSPQTVSAS. Residues 425-436 show a composition bias toward basic and acidic residues; the sequence is PRDDLSPARDLL. Positions 475–489 are enriched in low complexity; it reads TSQTSTLQSLTPQSS. A compositionally biased stretch (polar residues) spans 532–545; the sequence is TGVQPSKTEQQQGP.

It belongs to the anion channel-forming bestrophin (TC 1.A.46) family. Calcium-sensitive chloride channel subfamily. In terms of tissue distribution, present in skeletal muscle and weakly in brain, spinal cord, bone marrow and retina.

It is found in the cell membrane. The catalysed reaction is chloride(in) = chloride(out). Ligand-gated anion channel that allows the movement of chloride monoatomic anions across cell membranes when activated by calcium (Ca2+). The polypeptide is Bestrophin-3 (Homo sapiens (Human)).